The chain runs to 302 residues: Acetylglutamate kinase (302 aa).

Substrate contacts are provided by residues 73–74 (GG), Arg-95, and Asn-200.

This sequence belongs to the acetylglutamate kinase family. ArgB subfamily.

It is found in the cytoplasm. The enzyme catalyses N-acetyl-L-glutamate + ATP = N-acetyl-L-glutamyl 5-phosphate + ADP. It participates in amino-acid biosynthesis; L-arginine biosynthesis; N(2)-acetyl-L-ornithine from L-glutamate: step 2/4. Functionally, catalyzes the ATP-dependent phosphorylation of N-acetyl-L-glutamate. The protein is Acetylglutamate kinase of Sphingopyxis alaskensis (strain DSM 13593 / LMG 18877 / RB2256) (Sphingomonas alaskensis).